We begin with the raw amino-acid sequence, 116 residues long: MKTIIVFLSLLVLATKFGDANEGVNQEQMKEVIQNEFREDFLNEMAAMSLLQQLEAIESTLLEKEADRNSRQKRCNGKNVPCGSNHSPCCSGLSCEETFGYGWLYKSPYCVIPSNG.

A signal peptide spans 1–20 (MKTIIVFLSLLVLATKFGDA). A propeptide spanning residues 21–74 (NEGVNQEQMKEVIQNEFREDFLNEMAAMSLLQQLEAIESTLLEKEADRNSRQKR) is cleaved from the precursor. 3 disulfide bridges follow: cysteine 75/cysteine 90, cysteine 82/cysteine 95, and cysteine 89/cysteine 110.

This sequence belongs to the neurotoxin 14 (magi-1) family. 06 (ICK-Trit) subfamily. Expressed by the venom gland.

The protein resides in the secreted. Ion channel inhibitor. The chain is U16-barytoxin-Tl1c from Trittame loki (Brush-footed trapdoor spider).